Consider the following 445-residue polypeptide: Na(+)-translocating NADH-quinone reductase subunit A (445 aa).

It belongs to the NqrA family. Composed of six subunits; NqrA, NqrB, NqrC, NqrD, NqrE and NqrF.

The catalysed reaction is a ubiquinone + n Na(+)(in) + NADH + H(+) = a ubiquinol + n Na(+)(out) + NAD(+). NQR complex catalyzes the reduction of ubiquinone-1 to ubiquinol by two successive reactions, coupled with the transport of Na(+) ions from the cytoplasm to the periplasm. NqrA to NqrE are probably involved in the second step, the conversion of ubisemiquinone to ubiquinol. This Marinomonas sp. (strain MWYL1) protein is Na(+)-translocating NADH-quinone reductase subunit A.